We begin with the raw amino-acid sequence, 948 residues long: MLKLLLGDPNARKLKRYQPIVTDINILEEDIALLSDDQLRSKTADFRQQFENVVSFAKQRALLDELLPEAFAVVREAAKRVLGMRHFDVQLIGGMVLHEGQIGEMKTGEGKTLVATLPSYLNALTGRGVHVVTVNDYLARRDAEWMGQVHRFLGLSVGLIQQDMSPAERRRNYACDITYATNSELGFDYLRDNMATDLSEVVQREFQYCVIDEVDSILIDEARTPLIISGQVERPQEKYQQAADVAAALERAAEQGKDGIDPEGDYEVDEKQRSCTLTDEGFAKAEQNLRVRDLFDPADPWAHYITNALKAKELFVRDVNYIVRDGEAVIVDEFTGRVMPGRRWSDGQHQAIEAKEQLAIQPETQTLASITYQNFFLLYPRLAGMTGTAKTEEVEFEKTYKLETSVIPTNQPRARADWVDQVYKTESAKWRAVANETAEIHKQGRPVLVGTTSVEKSELLSSLLSEQEIPHNLLNAKPENVEREAEIVAQAGRAGAVTIATNMAGRGTDIILGGNSDYMARLKLREVLLPRLVRPEEGHRPPVPLQRAAETGGGFAAKAAASNGSHGHVLSEARAIGSLYPCSLTDDTDQFLAELARELVKVWGDRALSVIELEDRISTAAEKAPTDDAQIAALRESIARVKTEYDVVVTQEEVRVREAGGLHVIGTERHESRRVDNQLRGRAGRQGDLGSTRFFLSLEDNLLRIFGGERVASLMNAFRVEEDMPIESGMLTRSLEGAQKKVETYYYDIRKQVFEYDEVMNNQRRAVYAERRRVLEGRGLKKQVIGYGERTMDDIVEAYVNPDLPPEEWDLGQLVSKVQQFVYLLEDLKPEQLQGLSMEELKSFLQEQLRNAYDIKEGQIEQQRPGLMREAERFFILQQIDTLWREHLQAMDALRESVGLRGYGQKDPLIEYKNEGYDMFLEMMANMRRNVIYSMFMFQPAASGQEQA.

Residues Gln-90, 108 to 112, and Asp-509 contribute to the ATP site; that span reads GEGKT.

Belongs to the SecA family. In terms of assembly, monomer and homodimer. Part of the essential Sec protein translocation apparatus which comprises SecA, SecYEG and auxiliary proteins SecDF. Other proteins may also be involved.

The protein resides in the cell inner membrane. It localises to the cellular thylakoid membrane. It is found in the cytoplasm. The catalysed reaction is ATP + H2O + cellular proteinSide 1 = ADP + phosphate + cellular proteinSide 2.. Part of the Sec protein translocase complex. Interacts with the SecYEG preprotein conducting channel. Has a central role in coupling the hydrolysis of ATP to the transfer of proteins into and across the cell membrane, serving as an ATP-driven molecular motor driving the stepwise translocation of polypeptide chains across the membrane. Its function is as follows. Probably participates in protein translocation into and across both the cytoplasmic and thylakoid membranes in cyanobacterial cells. In Prochlorococcus marinus (strain MIT 9313), this protein is Protein translocase subunit SecA.